A 246-amino-acid chain; its full sequence is Lipoprotein-releasing system ATP-binding protein LolD 1 (246 aa).

Residues 6-244 form the ABC transporter domain; that stretch reads LKLERIRKDL…ASVTNEAASL (239 aa). 43-50 lines the ATP pocket; sequence GPSGSGKS.

The protein belongs to the ABC transporter superfamily. Lipoprotein translocase (TC 3.A.1.125) family. The complex is composed of two ATP-binding proteins (LolD) and two transmembrane proteins (LolC and LolE).

The protein localises to the cell inner membrane. Part of the ABC transporter complex LolCDE involved in the translocation of mature outer membrane-directed lipoproteins, from the inner membrane to the periplasmic chaperone, LolA. Responsible for the formation of the LolA-lipoprotein complex in an ATP-dependent manner. The protein is Lipoprotein-releasing system ATP-binding protein LolD 1 of Chlorobium chlorochromatii (strain CaD3).